Reading from the N-terminus, the 246-residue chain is E3 ubiquitin-protein ligase MARCHF2 (246 aa).

Residues 56–116 (DSQSDCPFCR…ELCHTEFAVE (61 aa)) form an RING-CH-type zinc finger. Cys64, Cys67, Cys80, Cys82, His90, Cys93, Cys106, and Cys109 together coordinate Zn(2+). The required for interaction with IKBKG stretch occupies residues 121 to 246 (PLTEWLKDPG…LKKVAEETPV (126 aa)). The next 2 helical transmembrane spans lie at 138-158 (LCCD…SGWL) and 175-195 (AVGL…WTLV).

Interacts with STX6; the interaction promotes MARCHF2-mediated ubiquitination and degradation of CFTR. Interacts with MARCHF3. Interacts with GOPC/CAL; the interaction leads to CFTR ubiquitination and degradation. Interacts with CFTR; the interaction leads to CFTR ubiqtuitination and degradation. Interacts (via PDZ domain) with DLG1 (via PDZ domains); the interaction leads to DLG1 ubiqtuitination and degradation. Interacts with ERGIC3. Interacts with ADRB2. Interacts with IKBKG/NEMO; during the late stages of macrophage viral and bacterial infection; the interaction leads to ubiquitination and degradation of IKBKG/NEMO.

The protein resides in the endoplasmic reticulum membrane. The protein localises to the lysosome membrane. It localises to the endosome membrane. Its subcellular location is the golgi apparatus membrane. It is found in the cytoplasm. The protein resides in the cell membrane. It carries out the reaction S-ubiquitinyl-[E2 ubiquitin-conjugating enzyme]-L-cysteine + [acceptor protein]-L-lysine = [E2 ubiquitin-conjugating enzyme]-L-cysteine + N(6)-ubiquitinyl-[acceptor protein]-L-lysine.. Its pathway is protein modification; protein ubiquitination. Its function is as follows. E3 ubiquitin-protein ligase that may mediate ubiquitination of TFRC and CD86, and promote their subsequent endocytosis and sorting to lysosomes via multivesicular bodies. E3 ubiquitin ligases accept ubiquitin from an E2 ubiquitin-conjugating enzyme in the form of a thioester and then directly transfer the ubiquitin to targeted substrates. Together with GOPC/CAL mediates the ubiquitination and lysosomal degradation of CFTR. Ubiquitinates and therefore mediates the degradation of DLG1. Regulates the intracellular trafficking and secretion of alpha1-antitrypsin/SERPINA1 and HP/haptoglobin via ubiquitination and degradation of the cargo receptor ERGIC3. Negatively regulates the antiviral and antibacterial immune response by repression of the NF-kB and type 1 IFN signaling pathways, via MARCHF2-mediated K48-linked polyubiquitination of IKBKG/NEMO, resulting in its proteasomal degradation. May be involved in endosomal trafficking through interaction with STX6. This is E3 ubiquitin-protein ligase MARCHF2 (Marchf2) from Mus musculus (Mouse).